Here is a 71-residue protein sequence, read N- to C-terminus: Translation initiation factor IF-1 (71 aa).

Positions 1-71 (MAKQAAIEQD…LTKARITYRY (71 aa)) constitute an S1-like domain.

It belongs to the IF-1 family. In terms of assembly, component of the 30S ribosomal translation pre-initiation complex which assembles on the 30S ribosome in the order IF-2 and IF-3, IF-1 and N-formylmethionyl-tRNA(fMet); mRNA recruitment can occur at any time during PIC assembly.

Its subcellular location is the cytoplasm. Its function is as follows. One of the essential components for the initiation of protein synthesis. Stabilizes the binding of IF-2 and IF-3 on the 30S subunit to which N-formylmethionyl-tRNA(fMet) subsequently binds. Helps modulate mRNA selection, yielding the 30S pre-initiation complex (PIC). Upon addition of the 50S ribosomal subunit IF-1, IF-2 and IF-3 are released leaving the mature 70S translation initiation complex. This Christiangramia forsetii (strain DSM 17595 / CGMCC 1.15422 / KT0803) (Gramella forsetii) protein is Translation initiation factor IF-1.